A 433-amino-acid polypeptide reads, in one-letter code: Tubulin epsilon and delta complex protein 2 (433 aa).

3 disordered regions span residues 45 to 69 (TGTR…ACTP), 95 to 169 (TKAG…VGMG), and 326 to 345 (QPPR…SCGG). A compositionally biased stretch (polar residues) spans 107 to 120 (KSRSIVTSSGTTAS). The residue at position 159 (Ser-159) is a Phosphoserine. The span at 327–339 (PPRPCPVGRPPGA) shows a compositional bias: pro residues.

Interacts with TEDC1. Found in a complex with TEDC1, TEDC2, TUBE1 and TUBD1.

It localises to the cell projection. The protein resides in the cilium. The protein localises to the cytoplasm. It is found in the cytoskeleton. Its subcellular location is the microtubule organizing center. It localises to the centrosome. The protein resides in the centriole. Its function is as follows. Acts as a positive regulator of ciliary hedgehog signaling. Required for centriole stability. The sequence is that of Tubulin epsilon and delta complex protein 2 from Homo sapiens (Human).